A 65-amino-acid chain; its full sequence is uncharacterized protein (65 aa).

Transmembrane regions (helical) follow at residues 12–31 (IVKW…LIVV) and 41–63 (LVAR…AIIV).

The protein resides in the cell membrane. This is an uncharacterized protein from Halalkalibacterium halodurans (strain ATCC BAA-125 / DSM 18197 / FERM 7344 / JCM 9153 / C-125) (Bacillus halodurans).